A 211-amino-acid chain; its full sequence is Pyridoxine/pyridoxamine 5'-phosphate oxidase (211 aa).

Substrate-binding positions include 7–10 (RREY) and Lys-65. FMN-binding positions include 60–65 (RIVLLK), 75–76 (YT), Arg-81, Lys-82, and Gln-104. Positions 122, 126, and 130 each coordinate substrate. Residues 139–140 (QS) and Trp-184 each bind FMN. Residue 190–192 (RLH) coordinates substrate. FMN is bound at residue Arg-194.

It belongs to the pyridoxamine 5'-phosphate oxidase family. In terms of assembly, homodimer. The cofactor is FMN.

The enzyme catalyses pyridoxamine 5'-phosphate + O2 + H2O = pyridoxal 5'-phosphate + H2O2 + NH4(+). It catalyses the reaction pyridoxine 5'-phosphate + O2 = pyridoxal 5'-phosphate + H2O2. It functions in the pathway cofactor metabolism; pyridoxal 5'-phosphate salvage; pyridoxal 5'-phosphate from pyridoxamine 5'-phosphate: step 1/1. The protein operates within cofactor metabolism; pyridoxal 5'-phosphate salvage; pyridoxal 5'-phosphate from pyridoxine 5'-phosphate: step 1/1. In terms of biological role, catalyzes the oxidation of either pyridoxine 5'-phosphate (PNP) or pyridoxamine 5'-phosphate (PMP) into pyridoxal 5'-phosphate (PLP). The sequence is that of Pyridoxine/pyridoxamine 5'-phosphate oxidase from Vibrio cholerae serotype O1 (strain ATCC 39315 / El Tor Inaba N16961).